Reading from the N-terminus, the 125-residue chain is MISIVLVSHSQKITEGLQEMIVEMVGDTVHIISSGGTGDGRLGTNALMIADNIATCTNSEHIYIFCDIGSAILSAETALELLDTELLEKTTIIDAPLVEGAFTAAVQSLVNPSKEAILQELTNVH.

One can recognise a PTS EIIA type-4 domain in the interval 1 to 125; that stretch reads MISIVLVSHS…AILQELTNVH (125 aa). H9 acts as the Tele-phosphohistidine intermediate in catalysis.

This sequence belongs to the PEP-utilizing enzyme family. As to quaternary structure, homodimer. The dihydroxyacetone kinase complex is composed of a homodimer of DhaM, a homodimer of DhaK and the subunit DhaL.

Its subcellular location is the cytoplasm. The enzyme catalyses dihydroxyacetone + phosphoenolpyruvate = dihydroxyacetone phosphate + pyruvate. Component of the dihydroxyacetone kinase complex, which is responsible for the phosphoenolpyruvate (PEP)-dependent phosphorylation of dihydroxyacetone. DhaM serves as the phosphoryl donor. Is phosphorylated by phosphoenolpyruvate in an EI- and HPr-dependent reaction, and a phosphorelay system on histidine residues finally leads to phosphoryl transfer to DhaL and dihydroxyacetone. The polypeptide is PEP-dependent dihydroxyacetone kinase 2, phosphoryl donor subunit DhaM (Listeria innocua serovar 6a (strain ATCC BAA-680 / CLIP 11262)).